The following is a 334-amino-acid chain: Methionine adenosyltransferase 2 subunit beta (334 aa).

Residues Thr-37–Leu-40, Tyr-60–Arg-62, Asn-71–Leu-72, Cys-93, Arg-97, and Tyr-159 contribute to the NADP(+) site. The interval Leu-319 to His-334 is required for interaction with MAT2A.

This sequence belongs to the dTDP-4-dehydrorhamnose reductase family. MAT2B subfamily. In terms of assembly, heterotrimer; composed of a catalytic mat2a homodimer that binds one regulatory mat2b chain. Heterohexamer; composed of a central, catalytic mat2a homotetramer flanked on either side by a regulatory mat2b chain. NADP binding increases the affinity for mat2a.

It functions in the pathway amino-acid biosynthesis; S-adenosyl-L-methionine biosynthesis; S-adenosyl-L-methionine from L-methionine: step 1/1. Its function is as follows. Regulatory subunit of S-adenosylmethionine synthetase 2, an enzyme that catalyzes the formation of S-adenosylmethionine from methionine and ATP. Regulates MAT2A catalytic activity by changing its kinetic properties, increasing its affinity for L-methionine. Can bind NADP (in vitro). In Xenopus laevis (African clawed frog), this protein is Methionine adenosyltransferase 2 subunit beta (mat2b).